Here is a 285-residue protein sequence, read N- to C-terminus: MLYLTKIRNAESEFTGNEQKIADFLRANVSELKSVSSRKMAKLLGISQSSIVKFAQKLGAQGFTELRMALIGEYSASREKTNATALHLHSSITSDDSLEVIARKLNREKELALEQTCALFDYARLQKIIEAISKAPFIQITGLGGSALVGRDLSFKLMKIGYRVACEADTHVQATVSQALKKGDVQIAISYSGSKKEIVLCAEAARKQGATVIAITSLTDSPLRRLAHFTLDTVSGETEWRSSSMSTRTAQNSVTDLLFVGLVQLNDVESLKMIERSSELTQRLK.

Residues 1-77 form the HTH rpiR-type domain; the sequence is MLYLTKIRNA…MALIGEYSAS (77 aa). Positions 37-56 form a DNA-binding region, H-T-H motif; the sequence is SRKMAKLLGISQSSIVKFAQ. The SIS domain occupies 128 to 268; that stretch reads IIEAISKAPF…FVGLVQLNDV (141 aa).

Homotetramer.

It functions in the pathway amino-sugar metabolism; N-acetylmuramate degradation [regulation]. Represses the expression of the murPQ operon involved in the uptake and degradation of N-acetylmuramic acid (MurNAc). Binds to two adjacent inverted repeats within the operator region. MurNAc 6-phosphate, the substrate of MurQ, is the specific inducer that weakens binding of MurR to the operator. The polypeptide is HTH-type transcriptional regulator MurR (Escherichia coli O17:K52:H18 (strain UMN026 / ExPEC)).